Reading from the N-terminus, the 60-residue chain is Large ribosomal subunit protein uL30 (60 aa).

The protein belongs to the universal ribosomal protein uL30 family. Part of the 50S ribosomal subunit.

The sequence is that of Large ribosomal subunit protein uL30 from Bacillus pumilus (strain SAFR-032).